Here is a 349-residue protein sequence, read N- to C-terminus: Divinyl chlorophyll a/b light-harvesting protein PcbB (349 aa).

6 helical membrane passes run 27–47, 57–77, 91–113, 201–221, 241–261, and 306–326; these read FIAA…AATL, LPMG…GIGF, IAIL…SVYF, VMGG…FHIA, AILS…AFWA, and LVNV…WHAL.

This sequence belongs to the PsbB/PsbC family. IsiA/Pcb subfamily. In terms of assembly, the antenna complex consists of divinyl chlorophylls (a and b) and divinyl chlorophyll a/b binding proteins and binds more divinyl chlorophyll b than does the antenna complex from high-light-adapted Prochlorococcus. Requires divinyl chlorophyll a as cofactor. It depends on divinyl chlorophyll b as a cofactor.

The protein localises to the cellular thylakoid membrane. In terms of biological role, the antenna complex functions as a light receptor, it captures and delivers excitation energy to photosystems II and I. The Prochlorales pcb genes are not related to higher plant LHCs. The polypeptide is Divinyl chlorophyll a/b light-harvesting protein PcbB (pcbB) (Prochlorococcus marinus (strain SARG / CCMP1375 / SS120)).